Reading from the N-terminus, the 59-residue chain is UPF0181 protein YoaH (59 aa).

It belongs to the UPF0181 family.

This Shigella flexneri protein is UPF0181 protein YoaH.